Here is a 204-residue protein sequence, read N- to C-terminus: Large ribosomal subunit protein uL13 (204 aa).

This sequence belongs to the universal ribosomal protein uL13 family.

The chain is Large ribosomal subunit protein uL13 (RpL13A) from Choristoneura parallela (Spotted fireworm moth).